The chain runs to 135 residues: Protein cornichon homolog 1 (135 aa).

The next 3 membrane-spanning stretches (helical) occupy residues 2 to 22 (VFVW…VIYQ), 51 to 71 (FVLQ…AMFL), and 111 to 131 (IVGL…TVLL).

Belongs to the cornichon family. In terms of assembly, interacts with HKT1;3.

It localises to the endoplasmic reticulum membrane. Its subcellular location is the golgi apparatus membrane. In terms of biological role, acts as a cargo receptor necessary for the transportation of the cation transporter HKT1;3 and possibly other secretory proteins from the endoplasmic reticulum (ER) in COPII-coated vesicles targeted to the Golgi apparatus. The protein is Protein cornichon homolog 1 of Oryza sativa subsp. japonica (Rice).